The sequence spans 236 residues: Orotidine 5'-phosphate decarboxylase (236 aa).

Substrate is bound by residues D17, K39, 66-75, T125, R187, Q196, G216, and R217; that span reads DLKFYDIPNT. K68 (proton donor) is an active-site residue.

The protein belongs to the OMP decarboxylase family. Type 1 subfamily. As to quaternary structure, homodimer.

It carries out the reaction orotidine 5'-phosphate + H(+) = UMP + CO2. It functions in the pathway pyrimidine metabolism; UMP biosynthesis via de novo pathway; UMP from orotate: step 2/2. Catalyzes the decarboxylation of orotidine 5'-monophosphate (OMP) to uridine 5'-monophosphate (UMP). This is Orotidine 5'-phosphate decarboxylase from Buchnera aphidicola subsp. Baizongia pistaciae (strain Bp).